Consider the following 324-residue polypeptide: 33 kDa ribonucleoprotein, chloroplastic (324 aa).

A chloroplast-targeting transit peptide spans 1–71 (MSGCCFSFAA…YRSSIFLSTC (71 aa)). RRM domains follow at residues 114–192 (GRLY…FPEV) and 217–296 (HKLY…AGQK). The interval 294–324 (GQKAPVSSPPVVETSPENDSDNSELLSSLSS) is disordered. Residues 298-308 (PVSSPPVVETS) show a composition bias toward low complexity.

The protein localises to the plastid. It is found in the chloroplast. In terms of biological role, could be involved in splicing and/or processing of chloroplast RNA's. The polypeptide is 33 kDa ribonucleoprotein, chloroplastic (Nicotiana sylvestris (Wood tobacco)).